The chain runs to 157 residues: S-ribosylhomocysteine lyase (157 aa).

Fe cation is bound by residues H54, H58, and C124.

This sequence belongs to the LuxS family. In terms of assembly, homodimer. Fe cation is required as a cofactor.

The catalysed reaction is S-(5-deoxy-D-ribos-5-yl)-L-homocysteine = (S)-4,5-dihydroxypentane-2,3-dione + L-homocysteine. Involved in the synthesis of autoinducer 2 (AI-2) which is secreted by bacteria and is used to communicate both the cell density and the metabolic potential of the environment. The regulation of gene expression in response to changes in cell density is called quorum sensing. Catalyzes the transformation of S-ribosylhomocysteine (RHC) to homocysteine (HC) and 4,5-dihydroxy-2,3-pentadione (DPD). This Lacticaseibacillus paracasei (strain ATCC 334 / BCRC 17002 / CCUG 31169 / CIP 107868 / KCTC 3260 / NRRL B-441) (Lactobacillus paracasei) protein is S-ribosylhomocysteine lyase.